Consider the following 180-residue polypeptide: NAD(P)H-quinone oxidoreductase subunit I, chloroplastic (180 aa).

2 consecutive 4Fe-4S ferredoxin-type domains span residues 55–84 (GRIHFEFDKCIACEVCVRVCPIDLPVVDWR) and 95–124 (LNYSIDFGICIFCGNCVEYCPTNCLSMTEE). [4Fe-4S] cluster-binding residues include cysteine 64, cysteine 67, cysteine 70, cysteine 74, cysteine 104, cysteine 107, cysteine 110, and cysteine 114.

The protein belongs to the complex I 23 kDa subunit family. NDH is composed of at least 16 different subunits, 5 of which are encoded in the nucleus. It depends on [4Fe-4S] cluster as a cofactor.

The protein resides in the plastid. It localises to the chloroplast thylakoid membrane. The catalysed reaction is a plastoquinone + NADH + (n+1) H(+)(in) = a plastoquinol + NAD(+) + n H(+)(out). It carries out the reaction a plastoquinone + NADPH + (n+1) H(+)(in) = a plastoquinol + NADP(+) + n H(+)(out). Functionally, NDH shuttles electrons from NAD(P)H:plastoquinone, via FMN and iron-sulfur (Fe-S) centers, to quinones in the photosynthetic chain and possibly in a chloroplast respiratory chain. The immediate electron acceptor for the enzyme in this species is believed to be plastoquinone. Couples the redox reaction to proton translocation, and thus conserves the redox energy in a proton gradient. In Liriodendron tulipifera (Tuliptree), this protein is NAD(P)H-quinone oxidoreductase subunit I, chloroplastic.